The sequence spans 494 residues: Integrin beta-like protein 1 (494 aa).

Residues M1 to A23 form the signal peptide. 40 disulfide bridges follow: C40/C71, C51/C69, C63/C74, C76/C89, C91/C112, C96/C110, C104/C115, C117/C126, C132/C159, C143/C157, C151/C162, C164/C178, C180/C202, C185/C200, C194/C205, C207/C216, C220/C247, C231/C245, C239/C250, C252/C269, C271/C296, C276/C294, C288/C299, C301/C310, C316/C343, C327/C341, C335/C346, C348/C361, C363/C384, C368/C382, C376/C387, C389/C398, C404/C431, C415/C429, C423/C434, C436/C448, C450/C471, C455/C469, C463/C474, and C476/C485. 10 consecutive I-EGF domains span residues C40 to E90, C91 to Q127, C132 to E179, C180 to E217, C220 to E270, C271 to E311, C316 to E362, C363 to Q399, C404 to D449, and C450 to E486. The stretch at C51–V95 is one I repeat. A cysteine-rich tandem repeats region spans residues C51–P494. The II repeat unit spans residues C96–M142. The stretch at C143–E184 is one III repeat. The stretch at C185 to R230 is one IV repeat. One copy of the V repeat lies at C231–D275. One copy of the VI repeat lies at C276 to K326. The VII repeat unit spans residues C327–R367. Residues C368–L414 form a VIII repeat. N405 is a glycosylation site (N-linked (GlcNAc...) asparagine). Residues C415–D454 form an IX repeat. One copy of the X repeat lies at C455–P494.

The protein localises to the secreted. This is Integrin beta-like protein 1 (Itgbl1) from Rattus norvegicus (Rat).